We begin with the raw amino-acid sequence, 144 residues long: D-aminoacyl-tRNA deacylase (144 aa).

Residues 136–137 (GP) carry the Gly-cisPro motif, important for rejection of L-amino acids motif.

Belongs to the DTD family. In terms of assembly, homodimer.

The protein localises to the cytoplasm. It catalyses the reaction glycyl-tRNA(Ala) + H2O = tRNA(Ala) + glycine + H(+). It carries out the reaction a D-aminoacyl-tRNA + H2O = a tRNA + a D-alpha-amino acid + H(+). Its function is as follows. An aminoacyl-tRNA editing enzyme that deacylates mischarged D-aminoacyl-tRNAs. Also deacylates mischarged glycyl-tRNA(Ala), protecting cells against glycine mischarging by AlaRS. Acts via tRNA-based rather than protein-based catalysis; rejects L-amino acids rather than detecting D-amino acids in the active site. By recycling D-aminoacyl-tRNA to D-amino acids and free tRNA molecules, this enzyme counteracts the toxicity associated with the formation of D-aminoacyl-tRNA entities in vivo and helps enforce protein L-homochirality. The protein is D-aminoacyl-tRNA deacylase of Haemophilus influenzae (strain ATCC 51907 / DSM 11121 / KW20 / Rd).